A 545-amino-acid chain; its full sequence is Serine/threonine-protein kinase PAK 1 (545 aa).

The disordered stretch occupies residues 1–77; it reads MSNNGLDIQD…KEKERPEISL (77 aa). Residue serine 2 is modified to N-acetylserine. The residue at position 21 (serine 21) is a Phosphoserine; by PKB and autocatalysis. Position 57 is a phosphoserine; by autocatalysis (serine 57). The span at 68-77 shows a compositional bias: basic and acidic residues; it reads KEKERPEISL. The interval 70 to 140 is autoregulatory region; it reads KERPEISLPS…YNSKKTSNSQ (71 aa). A CRIB domain is found at 75 to 88; the sequence is ISLPSDFEHTIHVG. The GTPase-binding stretch occupies residues 75–105; it reads ISLPSDFEHTIHVGFDAVTGEFTGMPEQWAR. Threonine 84 bears the Phosphothreonine; by OXSR1 mark. At serine 115 the chain carries Phosphoserine. Tyrosine 131 and tyrosine 142 each carry phosphotyrosine. Phosphoserine; by autocatalysis is present on serine 144. Serine 149 carries the post-translational modification Phosphoserine. Tyrosine 153 carries the phosphotyrosine; by JAK2 modification. Positions 159–198 are disordered; that stretch reads LNVKAVSETPAVPPVSEDEDDDDDDATPPPVIAPRPEHTK. The residue at position 174 (serine 174) is a Phosphoserine. Residues 174-184 are compositionally biased toward acidic residues; the sequence is SEDEDDDDDDA. Threonine 185 carries the post-translational modification Phosphothreonine. Residue serine 199 is modified to Phosphoserine; by autocatalysis. Tyrosine 201 is modified (phosphotyrosine; by JAK2). Serine 204 bears the Phosphoserine mark. A disordered region spans residues 211–251; sequence VTPTRDVATSPISPTENNTTPPDALTRNTEKQKKKPKMSDE. Threonine 212 and threonine 219 each carry phosphothreonine. 2 positions are modified to phosphoserine: serine 220 and serine 223. Polar residues predominate over residues 220-231; sequence SPISPTENNTTP. Threonine 225, threonine 229, and threonine 230 each carry phosphothreonine. The Protein kinase domain maps to 270–521; the sequence is YTRFEKIGQG…AKELLQHQFL (252 aa). Residue 276–284 participates in ATP binding; that stretch reads IGQGASGTV. Tyrosine 285 carries the post-translational modification Phosphotyrosine; by JAK2. Residues lysine 299 and 345–347 contribute to the ATP site; that span reads EYL. The active-site Proton acceptor is aspartate 389. A Phosphothreonine; by autocatalysis, BRSK2 and PDPK1 modification is found at threonine 423.

The protein belongs to the protein kinase superfamily. STE Ser/Thr protein kinase family. STE20 subfamily. Homodimer; homodimerization results in autoinhibition. Active as monomer. Interacts with GIT1. Component of cytoplasmic complexes, which also contains PXN, ARHGEF7 and GIT1. Interacts with NISCH. Interacts with DVL1; mediates the formation of a DVL1, MUSK and PAK1 ternary complex involved in AChR clustering. Binds to the caspase-cleaved p110 isoform of CDC2L1 and CDC2L2, p110C, but not the full-length proteins. Interacts with ARHGEF7. Interacts tightly with GTP-bound but not GDP-bound CDC42/P21 and RAC1. Interacts with SCRIB. Interacts with PDPK1. Interacts (via kinase domain) with RAF1. Interacts with NCK1 and NCK2. Interacts with TBCB. Interacts with BRSK2. Interacts with SNAI1. Interacts with CIB1 isoform 2. Interacts with CIB1 (via N-terminal region); the interaction is direct, promotes PAK1 activity and occurs in a calcium-dependent manner. Interacts with INPP5K. Interacts with gamma-tubulin. Interacts with RHOU; the interaction promotes PAK1 activation. It depends on Mg(2+) as a cofactor. Autophosphorylated in trans, meaning that in a dimer, one kinase molecule phosphorylates the other one. Activated by autophosphorylation at Thr-423 in response to a conformation change, triggered by interaction with GTP-bound CDC42 or RAC1. Activated by phosphorylation at Thr-423 by BRSK2 and by PDPK1. Phosphorylated by JAK2 in response to PRL; this increases PAK1 kinase activity. Phosphorylated at Ser-21 by PKB/AKT; this reduces interaction with NCK1 and association with focal adhesion sites. Upon DNA damage, phosphorylated at Thr-212 and translocates to the nucleoplasm. Phosphorylated at tyrosine residues, which can be enhanced by NTN1. In terms of tissue distribution, overexpressed in gastric cancer cells and tissues (at protein level).

It is found in the cytoplasm. The protein resides in the cell junction. It localises to the focal adhesion. Its subcellular location is the cell projection. The protein localises to the lamellipodium. It is found in the cell membrane. The protein resides in the ruffle membrane. It localises to the invadopodium. Its subcellular location is the nucleus. The protein localises to the nucleoplasm. It is found in the chromosome. The protein resides in the cytoskeleton. It localises to the microtubule organizing center. Its subcellular location is the centrosome. The enzyme catalyses L-seryl-[protein] + ATP = O-phospho-L-seryl-[protein] + ADP + H(+). It catalyses the reaction L-threonyl-[protein] + ATP = O-phospho-L-threonyl-[protein] + ADP + H(+). With respect to regulation, activated by binding small G proteins. Binding of GTP-bound CDC42 or RAC1 to the autoregulatory region releases monomers from the autoinhibited dimer, and enables activation by phosphorylation of Thr-423. Phosphorylation of Thr-84 by OXSR1 inhibits activation. Protein kinase involved in intracellular signaling pathways downstream of integrins and receptor-type kinases that plays an important role in cytoskeleton dynamics, in cell adhesion, migration, proliferation, apoptosis, mitosis, and in vesicle-mediated transport processes. Can directly phosphorylate BAD and protects cells against apoptosis. Activated by interaction with CDC42 and RAC1. Functions as a GTPase effector that links the Rho-related GTPases CDC42 and RAC1 to the JNK MAP kinase pathway. Phosphorylates and activates MAP2K1, and thereby mediates activation of downstream MAP kinases. Involved in the reorganization of the actin cytoskeleton, actin stress fibers and of focal adhesion complexes. Phosphorylates the tubulin chaperone TBCB and thereby plays a role in the regulation of microtubule biogenesis and organization of the tubulin cytoskeleton. Plays a role in the regulation of insulin secretion in response to elevated glucose levels. Part of a ternary complex that contains PAK1, DVL1 and MUSK that is important for MUSK-dependent regulation of AChR clustering during the formation of the neuromuscular junction (NMJ). Activity is inhibited in cells undergoing apoptosis, potentially due to binding of CDC2L1 and CDC2L2. Phosphorylates MYL9/MLC2. Phosphorylates RAF1 at 'Ser-338' and 'Ser-339' resulting in: activation of RAF1, stimulation of RAF1 translocation to mitochondria, phosphorylation of BAD by RAF1, and RAF1 binding to BCL2. Phosphorylates SNAI1 at 'Ser-246' promoting its transcriptional repressor activity by increasing its accumulation in the nucleus. In podocytes, promotes NR3C2 nuclear localization. Required for atypical chemokine receptor ACKR2-induced phosphorylation of LIMK1 and cofilin (CFL1) and for the up-regulation of ACKR2 from endosomal compartment to cell membrane, increasing its efficiency in chemokine uptake and degradation. In synapses, seems to mediate the regulation of F-actin cluster formation performed by SHANK3, maybe through CFL1 phosphorylation and inactivation. Plays a role in RUFY3-mediated facilitating gastric cancer cells migration and invasion. In response to DNA damage, phosphorylates MORC2 which activates its ATPase activity and facilitates chromatin remodeling. In neurons, plays a crucial role in regulating GABA(A) receptor synaptic stability and hence GABAergic inhibitory synaptic transmission through its role in F-actin stabilization. In hippocampal neurons, necessary for the formation of dendritic spines and excitatory synapses; this function is dependent on kinase activity and may be exerted by the regulation of actomyosin contractility through the phosphorylation of myosin II regulatory light chain (MLC). Along with GIT1, positively regulates microtubule nucleation during interphase. Phosphorylates FXR1, promoting its localization to stress granules and activity. Phosphorylates ILK on 'Thr-173' and 'Ser-246', promoting nuclear export of ILK. The polypeptide is Serine/threonine-protein kinase PAK 1 (Homo sapiens (Human)).